Consider the following 237-residue polypeptide: Ribose-5-phosphate isomerase A (237 aa).

Substrate is bound by residues Ser28–Thr31, Asp83–Asp86, and Lys97–Gly100. Glu106 acts as the Proton acceptor in catalysis. Lys124 serves as a coordination point for substrate.

This sequence belongs to the ribose 5-phosphate isomerase family. As to quaternary structure, homodimer.

The catalysed reaction is aldehydo-D-ribose 5-phosphate = D-ribulose 5-phosphate. Its pathway is carbohydrate degradation; pentose phosphate pathway; D-ribose 5-phosphate from D-ribulose 5-phosphate (non-oxidative stage): step 1/1. Functionally, catalyzes the reversible conversion of ribose-5-phosphate to ribulose 5-phosphate. This Thermomicrobium roseum (strain ATCC 27502 / DSM 5159 / P-2) protein is Ribose-5-phosphate isomerase A.